An 802-amino-acid chain; its full sequence is Protein SBE22 (802 aa).

2 disordered regions span residues 207–230 (SSTI…RSNS) and 323–345 (SGDP…QRHN).

This sequence belongs to the SBE2 family.

The protein resides in the cytoplasm. It localises to the golgi apparatus. In terms of biological role, with SBE2, is involved in cell wall integrity and polarity processes like bud growth. The sequence is that of Protein SBE22 (SBE22) from Vanderwaltozyma polyspora (strain ATCC 22028 / DSM 70294 / BCRC 21397 / CBS 2163 / NBRC 10782 / NRRL Y-8283 / UCD 57-17) (Kluyveromyces polysporus).